The primary structure comprises 299 residues: Proline iminopeptidase (299 aa).

In terms of domain architecture, AB hydrolase-1 spans 26–272 (VLLLAGGPGF…QFLYCANGSH (247 aa)). Ser103 serves as the catalytic Nucleophile. Asp245 is a catalytic residue. The active-site Proton donor is His272.

It belongs to the peptidase S33 family. Monomer.

It carries out the reaction Release of N-terminal proline from a peptide.. Its function is as follows. Releases the N-terminal proline from various substrates. This chain is Proline iminopeptidase, found in Chitinophaga pinensis (strain ATCC 43595 / DSM 2588 / LMG 13176 / NBRC 15968 / NCIMB 11800 / UQM 2034).